We begin with the raw amino-acid sequence, 179 residues long: Hypoxanthine-guanine phosphoribosyltransferase (179 aa).

The diphosphate site is built by Lys42 and Gly43. The Mg(2+) site is built by Glu98 and Asp99. Residue Glu102 is the Proton acceptor of the active site. GMP-binding positions include Lys130, 151-152 (FV), and Asp158. Arg164 provides a ligand contact to diphosphate.

This sequence belongs to the purine/pyrimidine phosphoribosyltransferase family. Requires Mg(2+) as cofactor.

The protein resides in the cytoplasm. The catalysed reaction is IMP + diphosphate = hypoxanthine + 5-phospho-alpha-D-ribose 1-diphosphate. It catalyses the reaction GMP + diphosphate = guanine + 5-phospho-alpha-D-ribose 1-diphosphate. The protein operates within purine metabolism; IMP biosynthesis via salvage pathway; IMP from hypoxanthine: step 1/1. It participates in purine metabolism; GMP biosynthesis via salvage pathway; GMP from guanine: step 1/1. Its function is as follows. Purine salvage pathway enzyme that catalyzes the transfer of the ribosyl-5-phosphate group from 5-phospho-alpha-D-ribose 1-diphosphate (PRPP) to the N9 position of the 6-oxopurines hypoxanthine and guanine to form the corresponding ribonucleotides IMP (inosine 5'-monophosphate) and GMP (guanosine 5'-monophosphate), with the release of PPi. The sequence is that of Hypoxanthine-guanine phosphoribosyltransferase (hpt) from Staphylococcus epidermidis (strain ATCC 35984 / DSM 28319 / BCRC 17069 / CCUG 31568 / BM 3577 / RP62A).